A 150-amino-acid chain; its full sequence is Catabolic 3-dehydroquinase 2 (150 aa).

Tyr23 serves as the catalytic Proton acceptor. Residues Asn74, His80, and Asp87 each contribute to the substrate site. The Proton donor role is filled by His100. Substrate contacts are provided by residues 101-102 and Arg111; that span reads IT.

The protein belongs to the type-II 3-dehydroquinase family. As to quaternary structure, homododecamer. Adopts a ring-like structure, composed of an arrangement of two hexameric rings stacked on top of one another.

It carries out the reaction 3-dehydroquinate = 3-dehydroshikimate + H2O. The protein operates within aromatic compound metabolism; 3,4-dihydroxybenzoate biosynthesis; 3,4-dihydroxybenzoate from 3-dehydroquinate: step 1/2. Its function is as follows. Is involved in the catabolism of quinate. Allows the utilization of quinate as carbon source via the beta-ketoadipate pathway. The protein is Catabolic 3-dehydroquinase 2 of Neosartorya fischeri (strain ATCC 1020 / DSM 3700 / CBS 544.65 / FGSC A1164 / JCM 1740 / NRRL 181 / WB 181) (Aspergillus fischerianus).